The chain runs to 517 residues: MADADEGFGLARTPLEPDSKDRSCDSKPESALGAPSKSPSSPQAAFTQQGMEGIKVFLHERELWLKFHEVGTEMIITKAGRQMFPSYKVKVTGLNPKTKYILLMDIVPADDHRYKFADNKWSVTGKAEPAMPGRLYVHPDSPATGAHWMRQLVSFQKLKLTNNHLDPFGHIILNSMHKYQPRLHIVKADENNGFGSKNTAFCTHVFPETAFIAVTSYQNHKITQLKIENNPFAKGFRGSDDLELHRMSRMRSKEYPVVPRSTVRHKVANHSPFSSETRALSTSSNLGSQYQCENGVSGPSQDLLPPPNPYPLAQEHSQIYHCTKRKDEECSSTEHPYKKPYMETSPSEEDTFYRSGYPQQQGLSTSYRTESAQRQACMYASSAPPSEPVPSLEDISCNTWPSMPSYSSCTVTTVQPMDRLPYQHFSAHFTSGPLVPRLAGMANHGSPQLGEGMFQHQTSVTHQPVVRQCGPQTGLQSPGSLQPPEFLYTHGVPRTLSPHQYHSVHGVGMVPEWSENS.

Positions 1 to 46 (MADADEGFGLARTPLEPDSKDRSCDSKPESALGAPSKSPSSPQAAF) are disordered. The span at 15–28 (LEPDSKDRSCDSKP) shows a compositional bias: basic and acidic residues. Low complexity predominate over residues 34 to 45 (APSKSPSSPQAA). A DNA-binding region (T-box) is located at residues 58-238 (LHERELWLKF…NNPFAKGFRG (181 aa)). Disordered stretches follow at residues 270–313 (HSPF…YPLA) and 331–369 (SSTE…SYRT). A compositionally biased stretch (polar residues) spans 271–300 (SPFSSETRALSTSSNLGSQYQCENGVSGPS). Position 338 is an N6-acetyllysine (lysine 338). Residues 357-369 (YPQQQGLSTSYRT) are compositionally biased toward polar residues.

In terms of assembly, monomer. Homodimer (via the T-box); binds DNA as homodimer. Interacts (via the T-box) with NKX2-5 (via the homeobox); this complex binds DNA. Interacts with GATA4. Interacts with KAT2A and KAT2B. In terms of processing, acetylation at Lys-338 by KAT2A and KAT2B promotes nuclear retention.

Its subcellular location is the nucleus. It is found in the cytoplasm. Its function is as follows. DNA-binding protein that regulates the transcription of several genes and is involved in heart development and limb pattern formation. Binds to the core DNA motif of NPPA promoter. The protein is T-box transcription factor TBX5 (Tbx5) of Rattus norvegicus (Rat).